Reading from the N-terminus, the 300-residue chain is U1 small nuclear ribonucleoprotein 70 kDa homolog (300 aa).

The region spanning Arg-107–Arg-198 is the RRM domain. Disordered regions lie at residues Gly-204–Ala-248 and Asn-263–Tyr-300. A compositionally biased stretch (low complexity) spans Pro-265 to Val-279.

In terms of assembly, component of the spliceosome, where it is associated with snRNP U1. Binds stem loop I of U1 snRNA. Interacts with mRNA.

Its subcellular location is the nucleus. In terms of biological role, involved in nuclear mRNA splicing. This is U1 small nuclear ribonucleoprotein 70 kDa homolog (SNP1) from Saccharomyces cerevisiae (strain ATCC 204508 / S288c) (Baker's yeast).